A 571-amino-acid polypeptide reads, in one-letter code: GABA-specific permease (571 aa).

Residues 1-73 (MSMSSKNENK…IGYKQELKRQ (73 aa)) lie on the Cytoplasmic side of the membrane. Residues 74–94 (FSTLQVFGIAFSIMGLLPSIA) traverse the membrane as a helical segment. Residues 95-105 (SVMGGGLGGGP) are Vacuolar-facing. The helical transmembrane segment at 106 to 126 (ATLVWGWFVAAFFILLVGITM) threads the bilayer. Over 127–153 (AEHASSIPTAGGLYYWTYYYAPEGYKE) the chain is Cytoplasmic. The helical transmembrane segment at 154–174 (IISFIIGCSNSLALAAGVCSI) threads the bilayer. Residues 175–198 (DYGLAEEIAAAVTLTKDGNFEVTS) lie on the Vacuolar side of the membrane. Residues 199-219 (GKLYGIFAGAVVVMCICTCVA) form a helical membrane-spanning segment. At 220-228 (SGAIARLQT) the chain is on the cytoplasmic side. Residues 229 to 249 (LSIFANLFIIVLLFIALPIGT) form a helical membrane-spanning segment. At 250-271 (KHRMGGFNDGDFIFGKYENLSD) the chain is on the vacuolar side. The helical transmembrane segment at 272–292 (WNNGWQFCLAGFMPAVWTIGS) threads the bilayer. Topologically, residues 293 to 312 (FDSCVHQSEEAKDAKKSVPI) are cytoplasmic. Residues 313 to 333 (GIISSIAVCWILGWLIIICLM) traverse the membrane as a helical segment. Residues 334–364 (ACINPDIDSVLDSKYGFALAQIIYDSLGKKW) are Vacuolar-facing. The helical transmembrane segment at 365 to 385 (AIAFMSLIAFCQFLMGASITT) threads the bilayer. The Cytoplasmic portion of the chain corresponds to 386–416 (AVSRQVWAFSRDNGLPLSKYIKRVDSKYSVP). The helical transmembrane segment at 417 to 437 (FFAILAACVGSLILGLLCLID) threads the bilayer. Residues 438-441 (DAAT) are Vacuolar-facing. Residues 442–462 (DALFSLAVAGNNLAWSTPTVF) form a helical membrane-spanning segment. Over 463-482 (RLTSGRDLFRPGPFYLGKIW) the chain is Cytoplasmic. A helical membrane pass occupies residues 483–503 (SPIVAWTGVAFQLFIIILVMF). The Vacuolar portion of the chain corresponds to 504 to 514 (PSQQHGITKST). A helical membrane pass occupies residues 515-535 (MNYACVIGPGIWILAGIYYKV). The Cytoplasmic portion of the chain corresponds to 536-571 (YKKKYYHGPATNLSDDDYTEAVGADVIDTIMSKQEP).

This sequence belongs to the amino acid-polyamine-organocation (APC) superfamily. Amino acid/choline transporter (ACT) (TC 2.A.3.4) family.

Its subcellular location is the vacuole membrane. Functionally, required for high-affinity, high-specificity GABA transport. Also transports putrescine. The chain is GABA-specific permease (UGA4) from Saccharomyces cerevisiae (strain ATCC 204508 / S288c) (Baker's yeast).